A 650-amino-acid chain; its full sequence is MIEENKHFEKKMQEYDASQIQVLEGLEAVRMRPGMYIGSTAKEGLHHLVWEIVDNSIDEALAGFASHIKVFIEADNSITVVDDGRGIPVDIQAKTGRPAVETVFTVLHAGGKFGGGGYKVSGGLHGVGSSVVNALSTQLDVRVYKNGQIHYQEFKRGAVVADLEIIGTTDVTGTTVHFTPDPEIFTETTQFDYSVLAKRIQELAFLNRGLKISITDKRSGMEQEEHFHYEGGIGSYVEFLNDKKDVIFETPIYTDGELEGIAVEVAMQYTTSYQETVMSFANNIHTHEGGTHEQGFRAALTRVINDYAKKNKILKENEDNLTGEDVREGLTAVISVKHPNPQFEGQTKTKLGNSEVVKITNRLFSEAFQRFLLENPQVARKIVEKGILASKARIAAKRAREVTRKKSGLEISNLPGKLADCSSNDANQNELFIVEGDSAGGSAKSGRNREFQAILPIRGKILNVEKATMDKILANEEIRSLFTAMGTGFGADFDVSKARYQKLVIMTDADVDGAHIRTLLLTLIYRFMRPVLEAGYVYIAQPPIYGVKVGSEIKEYIQPGIDQEDQLKTALEKYSIGRSKPTVQRYKGLGEMDDHQLWETTMDPENRLMARVTVDDAAEADKVFDMLMGDRVEPRRDFIEENAVYSTLDI.

The 115-residue stretch at 429 to 543 (NELFIVEGDS…AGYVYIAQPP (115 aa)) folds into the Toprim domain. 3 residues coordinate Mg(2+): Glu-435, Asp-508, and Asp-510.

Belongs to the type II topoisomerase GyrB family. As to quaternary structure, heterotetramer, composed of two GyrA and two GyrB chains. In the heterotetramer, GyrA contains the active site tyrosine that forms a transient covalent intermediate with DNA, while GyrB binds cofactors and catalyzes ATP hydrolysis. Requires Mg(2+) as cofactor. Mn(2+) is required as a cofactor. The cofactor is Ca(2+).

The protein localises to the cytoplasm. The catalysed reaction is ATP-dependent breakage, passage and rejoining of double-stranded DNA.. Its function is as follows. A type II topoisomerase that negatively supercoils closed circular double-stranded (ds) DNA in an ATP-dependent manner to modulate DNA topology and maintain chromosomes in an underwound state. Negative supercoiling favors strand separation, and DNA replication, transcription, recombination and repair, all of which involve strand separation. Also able to catalyze the interconversion of other topological isomers of dsDNA rings, including catenanes and knotted rings. Type II topoisomerases break and join 2 DNA strands simultaneously in an ATP-dependent manner. In Streptococcus pyogenes serotype M18 (strain MGAS8232), this protein is DNA gyrase subunit B.